The sequence spans 122 residues: Toxin CSTX-1 (122 aa).

Residues methionine 1–alanine 20 form the signal peptide. A propeptide spanning residues glutamate 21–arginine 47 is cleaved from the precursor. 4 disulfides stabilise this stretch: cysteine 49–cysteine 64, cysteine 56–cysteine 73, cysteine 63–cysteine 91, and cysteine 75–cysteine 89. The interval alanine 99–lysine 112 is predicted alpha-helix. Arginine amide; in CSTX-2a is present on arginine 108. Lysine amide; in omega-ctenitoxin-Cs1a is present on lysine 121.

The protein belongs to the neurotoxin 19 (CSTX) family. 04 (U1-Lctx) subfamily. In terms of assembly, monomer. Interacts with CSTX-13 (AC P83919) (Kd=430 nM), but does not interact with CSTX-9 (AC P58604). In terms of tissue distribution, expressed by the venom gland.

The protein localises to the secreted. It is found in the target cell membrane. Spider venom toxin that shows calcium channel blocking activity and exhibits cytolytic activity by affecting the outer leaflet curvature and/or pore formation across the membrane. It blocks L-type calcium channels (Cav1/CACNA1) in mammalian neurons at nanomolar concentrations. Furthermore, it produces a slow voltage-independent block of mid/low and high voltage-activated calcium channels in cockroach neurons. Potassium ions, histamine, M-ctenitoxin-Cs1a (AC P83619), CSTX-9 (AC P58604), and CSTX-13 (AC P83919) synergistically increase the insecticidal activity of this toxin. In vivo, it causes paralysis in blow flies and provokes death in drosophila. Its function is as follows. Blocks voltage-activated calcium channels (Cav). Does not induce cell membrane permeability increase when tested on Xenopus oocytes. No alpha-helical structures are detectable. Is 7-fold less neurotoxic than omega-ctenitoxin-Cs1a on drosophila flies. In terms of biological role, blocks voltage-activated calcium channels (Cav). Is 190-fold less neurotoxic than omega-ctenitoxin-Cs1a on drosophila flies. The polypeptide is Toxin CSTX-1 (Cupiennius salei (American wandering spider)).